Reading from the N-terminus, the 564-residue chain is Efflux pump DEP3 (564 aa).

Polar residues predominate over residues 1–12 (MVYSSTSSSQNR). Positions 1-48 (MVYSSTSSSQNRPDGEKHVEAVGSSTRIPSDELVDRGGGDTTTGKQSP) are disordered. Residues 29–38 (PSDELVDRGG) are compositionally biased toward basic and acidic residues. Transmembrane regions (helical) follow at residues 65 to 85 (STTL…PAII), 91 to 111 (LELL…ILLW), 122 to 142 (WVYI…GAAP), 152 to 172 (VIAG…VSVL), 185 to 205 (STVV…AFAA), 212 to 232 (WGFY…FLLF), 255 to 275 (AVIF…GGVV), 281 to 301 (GTVI…IVLL), 332 to 352 (FLSS…FQFI), 362 to 382 (VRLL…GFLM), 386 to 406 (GLIP…TALM), 423 to 443 (ILIG…VQSL), 452 to 472 (AVGA…AISG), and 528 to 548 (TIWA…FPLL).

The protein belongs to the major facilitator superfamily. TCR/Tet family.

The protein localises to the cell membrane. In terms of biological role, efflux pump; part of the gene cluster that mediates the biosynthesis of depudecin, a highly oxidized eleven-carbon linear polyketide that acts as a histone deacetylase (HDAC) inhibitor and makes a small contribution to pathogenesis. Is presumed either to be responsible for exporting depudecin, to provide self-protection, or both. In Alternaria brassicicola (Dark leaf spot agent), this protein is Efflux pump DEP3.